The chain runs to 377 residues: Succinyl-diaminopimelate desuccinylase (377 aa).

H67 lines the Zn(2+) pocket. D69 is a catalytic residue. D100 contributes to the Zn(2+) binding site. E134 functions as the Proton acceptor in the catalytic mechanism. Positions 135, 163, and 349 each coordinate Zn(2+).

It belongs to the peptidase M20A family. DapE subfamily. As to quaternary structure, homodimer. Requires Zn(2+) as cofactor. Co(2+) serves as cofactor.

The enzyme catalyses N-succinyl-(2S,6S)-2,6-diaminopimelate + H2O = (2S,6S)-2,6-diaminopimelate + succinate. The protein operates within amino-acid biosynthesis; L-lysine biosynthesis via DAP pathway; LL-2,6-diaminopimelate from (S)-tetrahydrodipicolinate (succinylase route): step 3/3. In terms of biological role, catalyzes the hydrolysis of N-succinyl-L,L-diaminopimelic acid (SDAP), forming succinate and LL-2,6-diaminopimelate (DAP), an intermediate involved in the bacterial biosynthesis of lysine and meso-diaminopimelic acid, an essential component of bacterial cell walls. The protein is Succinyl-diaminopimelate desuccinylase of Haemophilus influenzae (strain PittGG).